The primary structure comprises 422 residues: Adenylosuccinate synthetase (422 aa).

GTP contacts are provided by residues 12–18 and 40–42; these read GDEGKGK and GHT. The active-site Proton acceptor is the Asp13. Mg(2+)-binding residues include Asp13 and Gly40. IMP-binding positions include 13 to 16, 38 to 41, Thr129, Arg143, Asn221, Thr236, and Arg300; these read DEGK and NAGH. His41 (proton donor) is an active-site residue. 296 to 302 is a binding site for substrate; the sequence is VTTGRKR. GTP-binding positions include Arg302, 328–330, and 410–412; these read KLD and GVG.

It belongs to the adenylosuccinate synthetase family. In terms of assembly, homodimer. Mg(2+) serves as cofactor.

It is found in the cytoplasm. It carries out the reaction IMP + L-aspartate + GTP = N(6)-(1,2-dicarboxyethyl)-AMP + GDP + phosphate + 2 H(+). The protein operates within purine metabolism; AMP biosynthesis via de novo pathway; AMP from IMP: step 1/2. Functionally, plays an important role in the de novo pathway and in the salvage pathway of purine nucleotide biosynthesis. Catalyzes the first committed step in the biosynthesis of AMP from IMP. In Pyrenophora tritici-repentis (strain Pt-1C-BFP) (Wheat tan spot fungus), this protein is Adenylosuccinate synthetase.